The primary structure comprises 266 residues: Non-structural maintenance of chromosomes element 1 homolog (266 aa).

Residues 1–102 are interaction with NSMCE3; sequence MQGSTRRAGA…SVSKMATDFA (102 aa). Residues 191-232 form an RING-type; atypical zinc finger; sequence CNICHGLLIQGQSCETCGIRMHLPCVAKYFQSIPEPHCPHCN. Residues 246 to 266 form a disordered region; that stretch reads EKEREAGISKSSRKSLRTRQH. A compositionally biased stretch (basic residues) spans 256 to 266; sequence SSRKSLRTRQH.

This sequence belongs to the NSE1 family. As to quaternary structure, component of the SMC5-SMC6 complex which consists at least of SMC5, SMC6, NSMCE2, NSMCE1, NSMCE4A or EID3 and NSMCE3. NSMCE1, NSMCE4A or EID3 and NSMCE3 probably form a subcomplex that bridges the head domains of the SMC5-SMC6 heterodimer. Interacts with NSMCE3. Ubiquitinated.

Its subcellular location is the nucleus. It localises to the chromosome. The protein localises to the telomere. The enzyme catalyses S-ubiquitinyl-[E2 ubiquitin-conjugating enzyme]-L-cysteine + [acceptor protein]-L-lysine = [E2 ubiquitin-conjugating enzyme]-L-cysteine + N(6)-ubiquitinyl-[acceptor protein]-L-lysine.. Its function is as follows. RING-type zinc finger-containing E3 ubiquitin ligase that assembles with melanoma antigen protein (MAGE) to catalyze the direct transfer of ubiquitin from E2 ubiquitin-conjugating enzyme to a specific substrate. Within MAGE-RING ubiquitin ligase complex, MAGE stimulates and specifies ubiquitin ligase activity likely through recruitment and/or stabilization of the E2 ubiquitin-conjugating enzyme at the E3:substrate complex. Involved in maintenance of genome integrity, DNA damage response and DNA repair. NSMCE3/MAGEG1 and NSMCE1 ubiquitin ligase are components of SMC5-SMC6 complex and may positively regulate homologous recombination-mediated DNA repair. This chain is Non-structural maintenance of chromosomes element 1 homolog (Nsmce1), found in Mus musculus (Mouse).